A 458-amino-acid polypeptide reads, in one-letter code: Adenylosuccinate synthetase (458 aa).

Residues 17 to 23 (GDEGKGK) and 45 to 47 (GHT) each bind GTP. The active-site Proton acceptor is the D18. Mg(2+)-binding residues include D18 and G45. IMP contacts are provided by residues 18-21 (DEGK), 43-46 (NAGH), T137, R151, Q247, T262, and R330. H46 (proton donor) is an active-site residue. Residue 326 to 332 (VTTGRSR) coordinates substrate. Residues R332, 358-360 (KLD), and 440-442 (STS) each bind GTP.

It belongs to the adenylosuccinate synthetase family. In terms of assembly, homodimer. The cofactor is Mg(2+).

It is found in the cytoplasm. The enzyme catalyses IMP + L-aspartate + GTP = N(6)-(1,2-dicarboxyethyl)-AMP + GDP + phosphate + 2 H(+). The protein operates within purine metabolism; AMP biosynthesis via de novo pathway; AMP from IMP: step 1/2. Functionally, plays an important role in the de novo pathway of purine nucleotide biosynthesis. Catalyzes the first committed step in the biosynthesis of AMP from IMP. This chain is Adenylosuccinate synthetase, found in Acidovorax sp. (strain JS42).